A 395-amino-acid polypeptide reads, in one-letter code: Tyrosine--tRNA ligase 2 (395 aa).

The short motif at 42–51 (PTAPDIHLGH) is the 'HIGH' region element. The short motif at 226 to 230 (KMSKS) is the 'KMSKS' region element. Residue K229 participates in ATP binding. The S4 RNA-binding domain maps to 334–395 (TPMANLLKEA…KRKFARITIA (62 aa)).

The protein belongs to the class-I aminoacyl-tRNA synthetase family. TyrS type 2 subfamily. As to quaternary structure, homodimer.

The protein resides in the cytoplasm. It carries out the reaction tRNA(Tyr) + L-tyrosine + ATP = L-tyrosyl-tRNA(Tyr) + AMP + diphosphate + H(+). In terms of biological role, catalyzes the attachment of tyrosine to tRNA(Tyr) in a two-step reaction: tyrosine is first activated by ATP to form Tyr-AMP and then transferred to the acceptor end of tRNA(Tyr). In Vibrio vulnificus (strain CMCP6), this protein is Tyrosine--tRNA ligase 2.